Reading from the N-terminus, the 308-residue chain is Homoserine kinase (308 aa).

Residue Pro-95–Ala-105 coordinates ATP.

The protein belongs to the GHMP kinase family. Homoserine kinase subfamily.

The protein localises to the cytoplasm. The enzyme catalyses L-homoserine + ATP = O-phospho-L-homoserine + ADP + H(+). It functions in the pathway amino-acid biosynthesis; L-threonine biosynthesis; L-threonine from L-aspartate: step 4/5. Functionally, catalyzes the ATP-dependent phosphorylation of L-homoserine to L-homoserine phosphate. The chain is Homoserine kinase from Corynebacterium diphtheriae (strain ATCC 700971 / NCTC 13129 / Biotype gravis).